The sequence spans 476 residues: MRIYNTATRQLEEFVTYTPRLARGYVCGITPYDSVHVGHGRVYVFFDMFRRYLEAQGYEVRLVINFTDIDDKIINRAREEFGAEAYKRWREVPERYIAEFFEMSKRLFIKPAYAYPKVTENVEDMVSWIKALVEKGYAYTAPDGSVYFEVGKVPNYGVLSRQRIEELMAGARVEPEPGKRNPLDFALWKSWTPGEPWWESPWCPGRPGWHLECVVMSTKHLGVPFDFHGGGADLIFPHHENEIAIAKAYFGVDNFARYWIHVGYLTVRGEKMSKSLGNVVTLREALSKYSGEALRLAYAMSHYRKPMEFSYEVLDQAEEMAKTIYTAYDELGQAVGDAGEEDKEALDYGRYVEEFYAALEDDFSTPQAAQQFYGLARYIISTVLHKIDKISRNTALSILSQYVKMADILGVLERREVPKEVEEAVKAAVEVRAKLRKERQYQLADYIRERLAGIGVELHDFGQRTYYTYRRGNRLR.

Residue Cys-27 coordinates Zn(2+). A 'HIGH' region motif is present at residues 29-39; that stretch reads ITPYDSVHVGH. Residues Cys-213, His-238, and Glu-242 each contribute to the Zn(2+) site. A 'KMSKS' region motif is present at residues 271 to 275; that stretch reads KMSKS. Position 274 (Lys-274) interacts with ATP.

It belongs to the class-I aminoacyl-tRNA synthetase family. It depends on Zn(2+) as a cofactor.

The protein resides in the cytoplasm. The enzyme catalyses tRNA(Cys) + L-cysteine + ATP = L-cysteinyl-tRNA(Cys) + AMP + diphosphate. The polypeptide is Cysteine--tRNA ligase (Pyrobaculum arsenaticum (strain DSM 13514 / JCM 11321 / PZ6)).